The following is a 129-amino-acid chain: Small ribosomal subunit protein uS11 (129 aa).

This sequence belongs to the universal ribosomal protein uS11 family. As to quaternary structure, part of the 30S ribosomal subunit. Interacts with proteins S7 and S18. Binds to IF-3.

Located on the platform of the 30S subunit, it bridges several disparate RNA helices of the 16S rRNA. Forms part of the Shine-Dalgarno cleft in the 70S ribosome. The protein is Small ribosomal subunit protein uS11 of Photobacterium profundum (strain SS9).